The sequence spans 420 residues: UDP-N-acetyl-D-mannosamine dehydrogenase (420 aa).

5 residues coordinate NAD(+): tyrosine 13, isoleucine 14, aspartate 33, threonine 85, and threonine 126. UDP-N-acetyl-alpha-D-mannosaminouronate-binding residues include arginine 160, valine 161, lysine 212, asparagine 216, arginine 219, histidine 250, arginine 252, and glycine 263. Lysine 212 (proton donor/acceptor) is an active-site residue. Catalysis depends on cysteine 266, which acts as the Nucleophile. Positions 330 and 331 each coordinate UDP-N-acetyl-alpha-D-mannosaminouronate. An NAD(+)-binding site is contributed by arginine 338. Lysine 416 is a binding site for UDP-N-acetyl-alpha-D-mannosaminouronate.

The protein belongs to the UDP-glucose/GDP-mannose dehydrogenase family. WecC subfamily. In terms of assembly, homodimer.

The enzyme catalyses UDP-N-acetyl-alpha-D-mannosamine + 2 NAD(+) + H2O = UDP-N-acetyl-alpha-D-mannosaminouronate + 2 NADH + 3 H(+). Its pathway is bacterial outer membrane biogenesis; enterobacterial common antigen biosynthesis. Its function is as follows. Catalyzes the four-electron oxidation of UDP-N-acetyl-D-mannosamine (UDP-ManNAc), reducing NAD(+) and releasing UDP-N-acetylmannosaminuronic acid (UDP-ManNAcA). This chain is UDP-N-acetyl-D-mannosamine dehydrogenase, found in Salmonella typhimurium (strain LT2 / SGSC1412 / ATCC 700720).